A 991-amino-acid chain; its full sequence is Bone morphogenetic protein 1 (991 aa).

The first 25 residues, 1–25 (MPGVARPPLPLLSLPLLLLLLLLPR), serve as a signal peptide directing secretion. A propeptide spanning residues 26-125 (AGRPLDLADY…RWRGRPRSRR (100 aa)) is cleaved from the precursor. Residues 86 to 131 (ARRPSIKAAGNSSALGGQGTSGQPQRESRGRWRGRPRSRRAATSRP) form a disordered region. Over residues 95–110 (GNSSALGGQGTSGQPQ) the composition is skewed to polar residues. Residue N96 is glycosylated (N-linked (GlcNAc...) asparagine). Basic residues predominate over residues 116–127 (RWRGRPRSRRAA). The 200-residue stretch at 126-325 (AATSRPERVW…AQARKLYKCP (200 aa)) folds into the Peptidase M12A domain. Residue N147 is glycosylated (N-linked (GlcNAc...) asparagine). 4 disulfides stabilise this stretch: C168/C324, C188/C210, C190/C191, and C327/C353. Zn(2+) is bound at residue H218. The active site involves E219. H222 and H228 together coordinate Zn(2+). CUB domains lie at 327-439 (CGET…YEAI) and 440-551 (CGGD…NFFK). N-linked (GlcNAc...) asparagine glycans are attached at residues N337 and N368. 15 cysteine pairs are disulfide-bonded: C380-C402, C440-C466, C493-C515, C556-C568, C564-C577, C579-C592, C596-C622, C649-C671, C712-C723, C719-C732, C734-C747, C752-C778, C805-C827, C865-C895, and C922-C944. One can recognise an EGF-like 1; calcium-binding domain in the interval 552–593 (EVDECSRPNRGGCEQRCLNTLGSYKCSCDPGYELAPDKRRCE). In terms of domain architecture, CUB 3 spans 596 to 707 (CGGFLTKLNG…KKGFKAHFFS (112 aa)). N604 is a glycosylation site (N-linked (GlcNAc...) asparagine). One can recognise an EGF-like 2; calcium-binding domain in the interval 708-748 (DKDECSKDNGGCQQDCVNTFGSYECQCRSGFVLHDNKHDCK). 2 CUB domains span residues 752–864 (CEHK…HSTE) and 865–981 (CGGQ…YTST). Omega-N-methylarginine is present on residues R939 and R942.

In terms of assembly, interacts with POSTN, the interaction promotes deposition on the extracellular matrix. The cofactor is Zn(2+). As to expression, at high levels in embryonic maternal deciduum and floor plate region of the neural tube. Less in developing membranous and endochondral bone, submucosa of intestine, dermis of skin and the mesenchyme of spleen and lung.

It localises to the golgi apparatus. The protein resides in the trans-Golgi network. The protein localises to the secreted. Its subcellular location is the extracellular space. It is found in the extracellular matrix. It catalyses the reaction Cleavage of the C-terminal propeptide at Ala-|-Asp in type I and II procollagens and at Arg-|-Asp in type III.. With respect to regulation, activity is increased by the procollagen C-endopeptidase enhancer protein. In terms of biological role, metalloprotease that plays key roles in regulating the formation of the extracellular matrix (ECM) via processing of various precursor proteins into mature functional enzymes or structural proteins. Thereby participates in several developmental and physiological processes such as cartilage and bone formation, muscle growth and homeostasis, wound healing and tissue repair. Roles in ECM formation include cleavage of the C-terminal propeptides from procollagens such as procollagen I, II and III or the proteolytic activation of the enzyme lysyl oxidase LOX, necessary to formation of covalent cross-links in collagen and elastic fibers. Additional substrates include matricellular thrombospondin-1/THBS1 whose cleavage leads to cell adhesion disruption and TGF-beta activation. This Mus musculus (Mouse) protein is Bone morphogenetic protein 1 (Bmp1).